The chain runs to 740 residues: Alpha-1,6-mannosylglycoprotein 6-beta-N-acetylglucosaminyltransferase A (740 aa).

Residues 1 to 13 (MAFFSPWKLSSQK) lie on the Cytoplasmic side of the membrane. Residues 14–30 (LGFFLVTFGFIWGMMLL) form a helical; Signal-anchor for type II membrane protein membrane-spanning segment. The Lumenal segment spans residues 31–740 (HFTIQQRTQP…GQVALCKDCL (710 aa)). N-linked (GlcNAc...) asparagine glycans are attached at residues Asn-109, Asn-114, and Asn-117. 9 disulfide bridges follow: Cys-144-Cys-182, Cys-155-Cys-195, Cys-171-Cys-337, Cys-371-Cys-625, Cys-648-Cys-723, Cys-652-Cys-725, Cys-659-Cys-712, Cys-680-Cys-701, and Cys-736-Cys-739. The interval 212 to 740 (NSLAEIRTDF…GQVALCKDCL (529 aa)) is sufficient for catalytic activity. Asn-333 carries an N-linked (GlcNAc...) asparagine glycan. 377 to 378 (DS) is a substrate binding site. 2 N-linked (GlcNAc...) asparagine glycosylation sites follow: Asn-432 and Asn-446. Glu-525 contributes to the UDP-N-acetyl-alpha-D-glucosamine binding site. Residue Lys-553 participates in substrate binding.

It belongs to the glycosyltransferase 18 family. Post-translationally, N-glycosylated. In terms of processing, a secreted form is released from the membrane after cleavage by gamma-secretase. In terms of tissue distribution, detected in kidney (at protein level). Detected in kidney.

It is found in the golgi apparatus membrane. The protein resides in the secreted. It carries out the reaction N(4)-{beta-D-GlcNAc-(1-&gt;2)-[beta-D-GlcNAc-(1-&gt;4)]-alpha-D-Man-(1-&gt;3)-[beta-D-GlcNAc-(1-&gt;2)-alpha-D-Man-(1-&gt;6)]-beta-D-Man-(1-&gt;4)-beta-D-GlcNAc-(1-&gt;4)-beta-D-GlcNAc}-L-asparaginyl-[protein] + UDP-N-acetyl-alpha-D-glucosamine = N(4)-{beta-D-GlcNAc-(1-&gt;2)-[beta-D-GlcNAc-(1-&gt;4)]-alpha-D-Man-(1-&gt;3)-[beta-D-GlcNAc-(1-&gt;2)-[beta-D-GlcNAc-(1-&gt;6)]-alpha-D-Man-(1-&gt;6)]-beta-D-Man-(1-&gt;4)-beta-D-GlcNAc-(1-&gt;4)-beta-D-GlcNAc}-L-asparaginyl-[protein] + UDP + H(+). It participates in protein modification; protein glycosylation. Catalyzes the addition of N-acetylglucosamine (GlcNAc) in beta 1-6 linkage to the alpha-linked mannose of biantennary N-linked oligosaccharides. Catalyzes an important step in the biosynthesis of branched, complex-type N-glycans, such as those found on EGFR, TGFR (TGF-beta receptor) and CDH2. Via its role in the biosynthesis of complex N-glycans, plays an important role in the activation of cellular signaling pathways, reorganization of the actin cytoskeleton, cell-cell adhesion and cell migration. MGAT5-dependent EGFR N-glycosylation enhances the interaction between EGFR and LGALS3 and thereby prevents rapid EGFR endocytosis and prolongs EGFR signaling. Required for efficient interaction between TGFB1 and its receptor. Enhances activation of intracellular signaling pathways by several types of growth factors, including FGF2, PDGF, IGF, TGFB1 and EGF. MGAT5-dependent CDH2 N-glycosylation inhibits CDH2-mediated homotypic cell-cell adhesion and contributes to the regulation of downstream signaling pathways. Promotes cell migration. Contributes to the regulation of the inflammatory response. MGAT5-dependent TCR N-glycosylation enhances the interaction between TCR and LGALS3, limits agonist-induced TCR clustering, and thereby dampens TCR-mediated responses to antigens. Required for normal leukocyte evasation and accumulation at sites of inflammation. Inhibits attachment of monocytes to the vascular endothelium and subsequent monocyte diapedesis. Its function is as follows. Promotes proliferation of umbilical vein endothelial cells and angiogenesis, at least in part by promoting the release of the growth factor FGF2 from the extracellular matrix. The polypeptide is Alpha-1,6-mannosylglycoprotein 6-beta-N-acetylglucosaminyltransferase A (Mgat5) (Rattus norvegicus (Rat)).